We begin with the raw amino-acid sequence, 886 residues long: Probable mixed-linked glucan synthase 8 (886 aa).

2 helical membrane-spanning segments follow: residues 87-107 and 118-138; these read ILLH…VLFF and GMFF…SWLL. Residue Asp-213 is part of the active site. Asp-413 and Asp-415 together coordinate substrate. Asp-577 is a catalytic residue. 6 consecutive transmembrane segments (helical) span residues 659 to 679, 683 to 703, 723 to 743, 775 to 795, 812 to 832, and 840 to 860; these read VFLL…IFYI, FPTY…IGMV, IIGA…KCFG, LLFP…AAIG, LGLV…LGIM, and YILF…DIAI.

Belongs to the glycosyltransferase 2 family. Plant cellulose synthase-like F subfamily.

It is found in the golgi apparatus membrane. In terms of biological role, may catalyze both beta-1,3 and beta-1,4 glycosidic linkage on beta-D-glucan. Essential for (1,3;1,4)-beta-D-glucans synthesis in grasses and cereals (Poaceae). The mixed-linked glucans (which are not present in walls of dicotyledons or most other monocotyledonous plants) are particularly important constituents of the walls of the starchy endosperm and aleurone cells of cereal grains such as oats, wheat, rice and barley. They can account for up to 70% by weight of the wall. The polypeptide is Probable mixed-linked glucan synthase 8 (CSFL8) (Oryza sativa subsp. japonica (Rice)).